The following is a 132-amino-acid chain: Ribosome-binding factor A (132 aa).

The protein belongs to the RbfA family. In terms of assembly, monomer. Binds 30S ribosomal subunits, but not 50S ribosomal subunits or 70S ribosomes.

It localises to the cytoplasm. In terms of biological role, one of several proteins that assist in the late maturation steps of the functional core of the 30S ribosomal subunit. Associates with free 30S ribosomal subunits (but not with 30S subunits that are part of 70S ribosomes or polysomes). Required for efficient processing of 16S rRNA. May interact with the 5'-terminal helix region of 16S rRNA. This Xanthomonas campestris pv. campestris (strain 8004) protein is Ribosome-binding factor A.